The primary structure comprises 378 residues: Ribosomal RNA large subunit methyltransferase G (378 aa).

It belongs to the methyltransferase superfamily. RlmG family.

It is found in the cytoplasm. It catalyses the reaction guanosine(1835) in 23S rRNA + S-adenosyl-L-methionine = N(2)-methylguanosine(1835) in 23S rRNA + S-adenosyl-L-homocysteine + H(+). Specifically methylates the guanine in position 1835 (m2G1835) of 23S rRNA. The chain is Ribosomal RNA large subunit methyltransferase G from Shewanella putrefaciens (strain CN-32 / ATCC BAA-453).